Consider the following 755-residue polypeptide: Xaa-Pro dipeptidyl-peptidase (755 aa).

Catalysis depends on charge relay system residues Ser-348, Asp-468, and His-498.

Belongs to the peptidase S15 family. Homodimer.

The protein resides in the cytoplasm. It catalyses the reaction Hydrolyzes Xaa-Pro-|- bonds to release unblocked, N-terminal dipeptides from substrates including Ala-Pro-|-p-nitroanilide and (sequentially) Tyr-Pro-|-Phe-Pro-|-Gly-Pro-|-Ile.. Removes N-terminal dipeptides sequentially from polypeptides having unsubstituted N-termini provided that the penultimate residue is proline. The chain is Xaa-Pro dipeptidyl-peptidase from Streptococcus thermophilus (strain ATCC BAA-250 / LMG 18311).